A 308-amino-acid chain; its full sequence is Glutaminase (308 aa).

Residues Ser65, Asn116, Glu161, Asn168, Tyr192, Tyr244, and Val262 each coordinate substrate.

It belongs to the glutaminase family. As to quaternary structure, homotetramer.

It carries out the reaction L-glutamine + H2O = L-glutamate + NH4(+). The chain is Glutaminase from Geobacillus kaustophilus (strain HTA426).